The sequence spans 324 residues: Glyoxylate/hydroxypyruvate reductase B (324 aa).

Residues Arg237 and Glu266 contribute to the active site. Residue His285 is the Proton donor of the active site.

It belongs to the D-isomer specific 2-hydroxyacid dehydrogenase family. GhrB subfamily. As to quaternary structure, homodimer.

It localises to the cytoplasm. The catalysed reaction is glycolate + NADP(+) = glyoxylate + NADPH + H(+). It catalyses the reaction (R)-glycerate + NAD(+) = 3-hydroxypyruvate + NADH + H(+). The enzyme catalyses (R)-glycerate + NADP(+) = 3-hydroxypyruvate + NADPH + H(+). Its function is as follows. Catalyzes the NADPH-dependent reduction of glyoxylate and hydroxypyruvate into glycolate and glycerate, respectively. The sequence is that of Glyoxylate/hydroxypyruvate reductase B from Salmonella typhi.